Here is a 1362-residue protein sequence, read N- to C-terminus: Integrator complex subunit 2 homolog (1362 aa).

Low complexity predominate over residues 1–10; it reads MITSNNNNKN. Disordered regions lie at residues 1–20, 629–660, and 928–963; these read MITSNNNNKNNNKKDVEMKS, TTGTTTGISPSSSTTTTSSTGGATSTSISSPN, and NNNKDLEDYNNNNNNNNDDVKMKDKEKEDKEEEEEE. Residues 945 to 955 show a composition bias toward basic and acidic residues; that stretch reads DDVKMKDKEKE.

It belongs to the Integrator subunit 2 family. As to quaternary structure, component of the Integrator complex. The core complex associates with protein phosphatase 2A subunits, to form the Integrator-PP2A (INTAC) complex.

The protein localises to the nucleus. Its subcellular location is the cytoplasm. Component of the integrator complex, a multiprotein complex that terminates RNA polymerase II (Pol II) transcription in the promoter-proximal region of genes. The integrator complex provides a quality checkpoint during transcription elongation by driving premature transcription termination of transcripts that are unfavorably configured for transcriptional elongation: the complex terminates transcription by (1) catalyzing dephosphorylation of the C-terminal domain (CTD) of Pol II subunit polr2a, (2) degrading the exiting nascent RNA transcript via endonuclease activity and (3) promoting the release of Pol II from bound DNA. The integrator complex is also involved in terminating the synthesis of non-coding Pol II transcripts, such as enhancer RNAs (eRNAs), small nuclear RNAs (snRNAs), telomerase RNAs and long non-coding RNAs (lncRNAs). The polypeptide is Integrator complex subunit 2 homolog (ints2) (Dictyostelium discoideum (Social amoeba)).